The following is a 305-amino-acid chain: DNA-directed RNA polymerase 35 kDa subunit (305 aa).

It belongs to the poxviridae DNA-directed RNA polymerase 35 kDa subunit family. As to quaternary structure, the DNA-dependent RNA polymerase used for intermediate and late genes expression consists of eight subunits 147 kDa, 133 kDa, 35 kDa, 30 kDa, 22 kDa, 19 kDa, 18 kDa and 7 kDa totalling more than 500 kDa in mass. The same holoenzyme, with the addition of the transcription-specificity factor RAP94, is used for early gene expression.

Its subcellular location is the virion. It catalyses the reaction RNA(n) + a ribonucleoside 5'-triphosphate = RNA(n+1) + diphosphate. Part of the DNA-dependent RNA polymerase which catalyzes the transcription of viral DNA into RNA using the four ribonucleoside triphosphates as substrates. Responsible for the transcription of early, intermediate and late genes. DNA-dependent RNA polymerase associates with the early transcription factor (ETF), itself composed of D6 and A7, thereby allowing the early genes transcription. Late transcription, and probably also intermediate transcription, require newly synthesized RNA polymerase. This chain is DNA-directed RNA polymerase 35 kDa subunit (OPG156), found in Bos taurus (Bovine).